The primary structure comprises 318 residues: Methionyl-tRNA formyltransferase (318 aa).

110 to 113 (SLLP) is a binding site for (6S)-5,6,7,8-tetrahydrofolate.

It belongs to the Fmt family.

It catalyses the reaction L-methionyl-tRNA(fMet) + (6R)-10-formyltetrahydrofolate = N-formyl-L-methionyl-tRNA(fMet) + (6S)-5,6,7,8-tetrahydrofolate + H(+). Its function is as follows. Attaches a formyl group to the free amino group of methionyl-tRNA(fMet). The formyl group appears to play a dual role in the initiator identity of N-formylmethionyl-tRNA by promoting its recognition by IF2 and preventing the misappropriation of this tRNA by the elongation apparatus. In Lacticaseibacillus paracasei (strain ATCC 334 / BCRC 17002 / CCUG 31169 / CIP 107868 / KCTC 3260 / NRRL B-441) (Lactobacillus paracasei), this protein is Methionyl-tRNA formyltransferase.